A 311-amino-acid polypeptide reads, in one-letter code: tRNA dimethylallyltransferase (311 aa).

9–16 is an ATP binding site; sequence GPTAVGKT. 11–16 contributes to the substrate binding site; the sequence is TAVGKT. The interaction with substrate tRNA stretch occupies residues 34-37; the sequence is DSMQ.

The protein belongs to the IPP transferase family. As to quaternary structure, monomer. The cofactor is Mg(2+).

The enzyme catalyses adenosine(37) in tRNA + dimethylallyl diphosphate = N(6)-dimethylallyladenosine(37) in tRNA + diphosphate. Functionally, catalyzes the transfer of a dimethylallyl group onto the adenine at position 37 in tRNAs that read codons beginning with uridine, leading to the formation of N6-(dimethylallyl)adenosine (i(6)A). This is tRNA dimethylallyltransferase from Clostridium botulinum (strain Langeland / NCTC 10281 / Type F).